The following is a 215-amino-acid chain: MTKTLIVNAHPDFRNAAHYSVQLEQAFLQLFQTRFPNDTVDVLNLYDTVIPQATVPELLGIWEKQAQHVNLSIEEQRLFAINQQLLQQFKAHHRIVIAMPLHNFNVPARLKDYIDNILVARETFRYTENGSVGLMTDNYRVMLLQASGSIYTRNDRYTPMEFSRLYLDKMFTEIMGFDRFEIVRAQGLQTNGVAVSQALKQAKMDLKAAFERFYD.

This sequence belongs to the azoreductase type 1 family. As to quaternary structure, homodimer. Requires FMN as cofactor.

The enzyme catalyses 2 a quinone + NADH + H(+) = 2 a 1,4-benzosemiquinone + NAD(+). It catalyses the reaction N,N-dimethyl-1,4-phenylenediamine + anthranilate + 2 NAD(+) = 2-(4-dimethylaminophenyl)diazenylbenzoate + 2 NADH + 2 H(+). Functionally, quinone reductase that provides resistance to thiol-specific stress caused by electrophilic quinones. In terms of biological role, also exhibits azoreductase activity. Catalyzes the reductive cleavage of the azo bond in aromatic azo compounds to the corresponding amines. The sequence is that of FMN-dependent NADH:quinone oxidoreductase 1 from Lactiplantibacillus plantarum (strain ATCC BAA-793 / NCIMB 8826 / WCFS1) (Lactobacillus plantarum).